A 155-amino-acid chain; its full sequence is Ribosomal RNA large subunit methyltransferase H (155 aa).

S-adenosyl-L-methionine contacts are provided by residues Leu-72, Gly-103, and 122-127; that span reads LGRMVW.

It belongs to the RNA methyltransferase RlmH family. As to quaternary structure, homodimer.

The protein localises to the cytoplasm. It carries out the reaction pseudouridine(1915) in 23S rRNA + S-adenosyl-L-methionine = N(3)-methylpseudouridine(1915) in 23S rRNA + S-adenosyl-L-homocysteine + H(+). Specifically methylates the pseudouridine at position 1915 (m3Psi1915) in 23S rRNA. This is Ribosomal RNA large subunit methyltransferase H from Cereibacter sphaeroides (strain KD131 / KCTC 12085) (Rhodobacter sphaeroides).